Here is a 186-residue protein sequence, read N- to C-terminus: Der GTPase-activating protein YihI (186 aa).

Residues 39 to 77 (LDAKAREDKKKRKHKGLASGSRHSAVEEKANKLQNEIKD) are disordered. A compositionally biased stretch (basic and acidic residues) spans 62–77 (SAVEEKANKLQNEIKD).

It belongs to the YihI family. Interacts with Der.

Its function is as follows. A GTPase-activating protein (GAP) that modifies Der/EngA GTPase function. May play a role in ribosome biogenesis. This is Der GTPase-activating protein YihI from Haemophilus influenzae (strain 86-028NP).